A 412-amino-acid polypeptide reads, in one-letter code: CCA-adding enzyme (412 aa).

Gly8 and Arg11 together coordinate ATP. Positions 8 and 11 each coordinate CTP. Mg(2+)-binding residues include Asp21 and Asp23. 3 residues coordinate ATP: Arg91, Arg137, and Arg140. CTP is bound by residues Arg91, Arg137, and Arg140.

It belongs to the tRNA nucleotidyltransferase/poly(A) polymerase family. Bacterial CCA-adding enzyme type 2 subfamily. Mg(2+) is required as a cofactor.

The catalysed reaction is a tRNA precursor + 2 CTP + ATP = a tRNA with a 3' CCA end + 3 diphosphate. It carries out the reaction a tRNA with a 3' CCA end + 2 CTP + ATP = a tRNA with a 3' CCACCA end + 3 diphosphate. Functionally, catalyzes the addition and repair of the essential 3'-terminal CCA sequence in tRNAs without using a nucleic acid template. Adds these three nucleotides in the order of C, C, and A to the tRNA nucleotide-73, using CTP and ATP as substrates and producing inorganic pyrophosphate. tRNA 3'-terminal CCA addition is required both for tRNA processing and repair. Also involved in tRNA surveillance by mediating tandem CCA addition to generate a CCACCA at the 3' terminus of unstable tRNAs. While stable tRNAs receive only 3'-terminal CCA, unstable tRNAs are marked with CCACCA and rapidly degraded. The chain is CCA-adding enzyme from Buchnera aphidicola subsp. Schizaphis graminum (strain Sg).